Here is a 511-residue protein sequence, read N- to C-terminus: Glutamate/gamma-aminobutyrate antiporter (511 aa).

At 1 to 14 (MATLVQTGKAKQLT) the chain is on the cytoplasmic side. The chain crosses the membrane as a helical span at residues 15-35 (LLGFFAITASMVMAVYEYPTF). Residues 36 to 41 (ATSGFS) are Periplasmic-facing. The helical transmembrane segment at 42-62 (LVFFLLLGGILWFIPVGLCAA) threads the bilayer. Over 63-93 (EMATVDGWEEGGVFAWVSNTLGPRWGFAAIS) the chain is Cytoplasmic. Residues 94-114 (FGYLQIAIGFIPMLYFVLGAL) form a helical membrane-spanning segment. Topologically, residues 115–127 (SYILKWPALNEDP) are periplasmic. Residues 128–148 (ITKTIAALIILWALALTQFGG) traverse the membrane as a helical segment. Residues 149-157 (TKYTARIAK) lie on the Cytoplasmic side of the membrane. Residues 158–178 (VGFFAGILLPAFILIALAAIY) traverse the membrane as a helical segment. Over 179–200 (LHSGAPVAIEMDSKTFFPDFSK) the chain is Periplasmic. A helical transmembrane segment spans residues 201-221 (VGTLVVFVAFILSYMGVEASA). At 222–239 (THVNEMSNPGRDYPLAML) the chain is on the cytoplasmic side. Residues 240–260 (LLMVAAICLSSVGGLSIAMVI) traverse the membrane as a helical segment. The Periplasmic portion of the chain corresponds to 261-291 (PGNEINLSAGVMQTFTVLMSHVAPEIEWTVR). Residues 292–312 (VISALLLLGVLAEIASWIVGP) form a helical membrane-spanning segment. Topologically, residues 313-335 (SRGMYVTAQKNLLPAAFAKMNKN) are cytoplasmic. Residues 336–356 (GVPVTLVISQLVITSIALIIL) traverse the membrane as a helical segment. The Periplasmic segment spans residues 357–366 (TNTGGGNNMS). Residues 367–387 (FLIALALTVVIYLCAYFMLFI) form a helical membrane-spanning segment. Residues 388–412 (GYIVLVLKHPDLKRTFNIPGGKGVK) lie on the Cytoplasmic side of the membrane. A helical transmembrane segment spans residues 413-433 (LVVAIVGLLTSIMAFIVSFLP). Residues 434–445 (PDNIQGDSTDMY) are Periplasmic-facing. A helical membrane pass occupies residues 446–466 (VELLVVSFLVVLALPFILYAV). The Cytoplasmic portion of the chain corresponds to 467 to 511 (HDRKGKANTGVTLEPINSQNAPKGHFFLHPRARSPHYIVMNDKKH).

It belongs to the amino acid-polyamine-organocation (APC) superfamily. Glutamate:GABA antiporter (GGA) (TC 2.A.3.7) family.

The protein resides in the cell inner membrane. It carries out the reaction 4-aminobutanoate(in) + L-glutamate(out) = 4-aminobutanoate(out) + L-glutamate(in). Shows pH-dependent activity. The glutamate analog L-trans-pyrrolidine-2,4-dicarboxylic acid (L-PDC) blocks the uptake of glutamate by selective inhibition. Functionally, involved in glutaminase-dependent acid resistance. Exchanges extracellular glutamate (Glu) for intracellular gamma-aminobutyric acid (GABA) under acidic conditions. The ability to survive the extremely acidic conditions of the stomach is essential for successful colonization of the host by commensal and pathogenic bacteria. The sequence is that of Glutamate/gamma-aminobutyrate antiporter (gadC) from Escherichia coli O157:H7.